Consider the following 861-residue polypeptide: Extra-large guanine nucleotide-binding protein 2 (861 aa).

Disordered regions lie at residues 1–32 and 121–168; these read MAAV…TSSG and VSGS…DDRV. Residues 131 to 143 are compositionally biased toward basic and acidic residues; sequence KRLDVPEEVKSPA. Residues 146–156 show a composition bias toward low complexity; it reads RLSPSSPLSAS. The span at 157–168 shows a compositional bias: basic and acidic residues; sequence AREEDHLDDDRV. The short motif at 204–211 is the Nuclear localization signal element; that stretch reads RAERKGKR. The RING-type; degenerate zinc-finger motif lies at 214-257; the sequence is CYRCQLGNRFTEKEVCIVCDAKYCFNCVRRAMGAMPEGRKCQAC. One can recognise a G-alpha domain in the interval 461–853; sequence MLNKLLLIGS…TSMFQEMSTT (393 aa). Residues 464 to 477 form a G1 motif region; sequence KLLLIGSEKGGATT. Position 469-477 (469-477) interacts with GTP; it reads GSEKGGATT. Ca(2+) is bound at residue threonine 476. The interval 523–545 is disordered; the sequence is EMSNDQSSGNVGDETSAKPGNSI. Residue 624–632 participates in GTP binding; it reads DILQAEGLS. The tract at residues 624–632 is G2 motif; it reads DILQAEGLS. A Ca(2+)-binding site is contributed by serine 632. The tract at residues 665-674 is G3 motif; that stretch reads YQLIRLNPRS. Residues 737-744 are G4 motif; it reads LLVLTKFD. 741-744 is a GTP binding site; that stretch reads TKFD. Residues 818 to 823 form a G5 motif region; it reads QVSLES.

This sequence belongs to the G-alpha family. XLG subfamily. As to quaternary structure, interacts with GB1. Component of a G-protein complex at least composed of XLG2 and GB1. Interacts with RTV1. Requires Ca(2+) as cofactor. In terms of tissue distribution, ubiquitous. Strongly expressed in vascular tissues, root and shoot meristems and lateral root primordia.

It localises to the nucleus. Functionally, guanine nucleotide-binding proteins (G proteins) are involved as modulators or transducers in various transmembrane signaling systems. Binds GTP with specificity. Plays a role in the root morphogenesis by regulation of the cell proliferation. Acts as a positive regulator in resistance to pathogen that triggers the salicylic acid (SA) pathway. Promotes the DNA binding activity of RTV1 specifically to promoter regions of FT and SOC1 in vivo leading to the activation of floral integrator genes. The protein is Extra-large guanine nucleotide-binding protein 2 (XLG2) of Arabidopsis thaliana (Mouse-ear cress).